A 163-amino-acid chain; its full sequence is Nucleotide-binding protein Mflv_5248 (163 aa).

It belongs to the YajQ family.

In terms of biological role, nucleotide-binding protein. This is Nucleotide-binding protein Mflv_5248 from Mycolicibacterium gilvum (strain PYR-GCK) (Mycobacterium gilvum (strain PYR-GCK)).